A 216-amino-acid chain; its full sequence is Probable transaldolase (216 aa).

The active-site Schiff-base intermediate with substrate is K83.

Belongs to the transaldolase family. Type 3B subfamily.

The protein resides in the cytoplasm. The enzyme catalyses D-sedoheptulose 7-phosphate + D-glyceraldehyde 3-phosphate = D-erythrose 4-phosphate + beta-D-fructose 6-phosphate. It participates in carbohydrate degradation; pentose phosphate pathway; D-glyceraldehyde 3-phosphate and beta-D-fructose 6-phosphate from D-ribose 5-phosphate and D-xylulose 5-phosphate (non-oxidative stage): step 2/3. Transaldolase is important for the balance of metabolites in the pentose-phosphate pathway. This chain is Probable transaldolase, found in Methanococcus aeolicus (strain ATCC BAA-1280 / DSM 17508 / OCM 812 / Nankai-3).